The following is a 276-amino-acid chain: Syntaxin-12 (276 aa).

At S2 the chain carries N-acetylserine. The Cytoplasmic portion of the chain corresponds to 2-248; that stretch reads SYGPLDMYRN…RAAYYQKKSR (247 aa). A coiled-coil region spans residues 33–131; that stretch reads IQRISQATAQ…RRVSEKEKES (99 aa). Residues S139, S142, S218, and S225 each carry the phosphoserine modification. A t-SNARE coiled-coil homology domain is found at 178-240; the sequence is LELIKERETA…ERATEQLQRA (63 aa). The chain crosses the membrane as a helical; Anchor for type IV membrane protein span at residues 249–269; that stretch reads KKMCILVLVLSVIIVILGLII. The Vesicular segment spans residues 270–276; it reads WLVYKTK.

Belongs to the syntaxin family. As to quaternary structure, associates with the BLOC-1 complex. Interacts with BLOC1S6. Interacts with NAPA and SNAP23. Identified in a complex containing STX6, STX12, VAMP4 and VTI1A. Interacts with GRIPAP1. Forms a complex with GRIP1, GRIA2 and NSG1; controls the intracellular fate of AMPAR and the endosomal sorting of the GRIA2 subunit toward recycling and membrane targeting. Interacts with NSG1. Interacts with TPC1. Interacts (via N-terminus) with VPS13B.

The protein localises to the endosome membrane. Its subcellular location is the golgi apparatus membrane. The protein resides in the endomembrane system. It localises to the early endosome membrane. It is found in the recycling endosome membrane. SNARE promoting fusion of transport vesicles with target membranes. Together with SNARE STX6, promotes movement of vesicles from endosomes to the cell membrane, and may therefore function in the endocytic recycling pathway. Through complex formation with GRIP1, GRIA2 and NSG1 controls the intracellular fate of AMPAR and the endosomal sorting of the GRIA2 subunit toward recycling and membrane targeting. This chain is Syntaxin-12 (STX12), found in Pongo abelii (Sumatran orangutan).